Consider the following 164-residue polypeptide: Putative glutamine amidotransferase-like protein RP713 (164 aa).

A Glutamine amidotransferase type-1 domain is found at 39–164; it reads TIANPNSLFM…VITVKIIIYM (126 aa).

This chain is Putative glutamine amidotransferase-like protein RP713, found in Rickettsia prowazekii (strain Madrid E).